The sequence spans 233 residues: Small ribosomal subunit protein uS3 (233 aa).

Positions 39–107 (VRQYLNKELA…PAQINIAEVR (69 aa)) constitute a KH type-2 domain.

The protein belongs to the universal ribosomal protein uS3 family. Part of the 30S ribosomal subunit. Forms a tight complex with proteins S10 and S14.

In terms of biological role, binds the lower part of the 30S subunit head. Binds mRNA in the 70S ribosome, positioning it for translation. The sequence is that of Small ribosomal subunit protein uS3 from Cronobacter sakazakii (strain ATCC BAA-894) (Enterobacter sakazakii).